The chain runs to 79 residues: Acyl carrier protein (79 aa).

The Carrier domain maps to 2–77 (SDIEARVKKI…NAIDYANTHH (76 aa)). Ser-37 carries the post-translational modification O-(pantetheine 4'-phosphoryl)serine.

The protein belongs to the acyl carrier protein (ACP) family. Post-translationally, 4'-phosphopantetheine is transferred from CoA to a specific serine of apo-ACP by AcpS. This modification is essential for activity because fatty acids are bound in thioester linkage to the sulfhydryl of the prosthetic group.

The protein localises to the cytoplasm. The protein operates within lipid metabolism; fatty acid biosynthesis. In terms of biological role, carrier of the growing fatty acid chain in fatty acid biosynthesis. In Polaromonas naphthalenivorans (strain CJ2), this protein is Acyl carrier protein.